A 192-amino-acid chain; its full sequence is Small ribosomal subunit protein bS16 (192 aa).

The segment at 153–192 is disordered; that stretch reads AEAKAKAEAEAAAAAEEAAETEETPVEAAAEEAPAAESAE. Positions 178-192 are enriched in low complexity; sequence VEAAAEEAPAAESAE.

Belongs to the bacterial ribosomal protein bS16 family.

This chain is Small ribosomal subunit protein bS16, found in Porphyromonas gingivalis (strain ATCC BAA-308 / W83).